A 312-amino-acid chain; its full sequence is Acetyl-coenzyme A carboxylase carboxyl transferase subunit beta (312 aa).

The CoA carboxyltransferase N-terminal domain maps to 24–293 (LWIKCPDSGQ…VEHAKPAPQL (270 aa)). The interval 286–312 (HAKPAPQLPPPAKPAETAEAPAVATSA) is disordered. Over residues 299-312 (PAETAEAPAVATSA) the composition is skewed to low complexity.

This sequence belongs to the AccD/PCCB family. Acetyl-CoA carboxylase is a heterohexamer composed of biotin carboxyl carrier protein (AccB), biotin carboxylase (AccC) and two subunits each of ACCase subunit alpha (AccA) and ACCase subunit beta (AccD).

The protein resides in the cytoplasm. It carries out the reaction N(6)-carboxybiotinyl-L-lysyl-[protein] + acetyl-CoA = N(6)-biotinyl-L-lysyl-[protein] + malonyl-CoA. It functions in the pathway lipid metabolism; malonyl-CoA biosynthesis; malonyl-CoA from acetyl-CoA: step 1/1. In terms of biological role, component of the acetyl coenzyme A carboxylase (ACC) complex. Biotin carboxylase (BC) catalyzes the carboxylation of biotin on its carrier protein (BCCP) and then the CO(2) group is transferred by the transcarboxylase to acetyl-CoA to form malonyl-CoA. The protein is Acetyl-coenzyme A carboxylase carboxyl transferase subunit beta of Bradyrhizobium sp. (strain ORS 278).